Here is a 64-residue protein sequence, read N- to C-terminus: Large ribosomal subunit protein bL35 (64 aa).

The segment covering 1 to 10 has biased composition (polar residues); it reads MPKMKTNSAA. A disordered region spans residues 1–64; that stretch reads MPKMKTNSAA…SKNMKKLLGR (64 aa).

Belongs to the bacterial ribosomal protein bL35 family.

This chain is Large ribosomal subunit protein bL35, found in Bifidobacterium adolescentis (strain ATCC 15703 / DSM 20083 / NCTC 11814 / E194a).